Consider the following 276-residue polypeptide: Malectin-B (276 aa).

A signal peptide spans methionine 1–glycine 26. The Lumenal segment spans residues serine 27–serine 253. A carbohydrate contacts are provided by tyrosine 67, tyrosine 89, tyrosine 116, phenylalanine 117, and aspartate 186. The tract at residues aspartate 202–alanine 249 is disordered. Residues glutamate 216–glycine 226 are compositionally biased toward acidic residues. Residues serine 229–alanine 249 show a composition bias toward polar residues. N-linked (GlcNAc...) asparagine glycosylation occurs at asparagine 252. Residues serine 254 to cysteine 274 form a helical membrane-spanning segment. Residues arginine 275 to leucine 276 lie on the Cytoplasmic side of the membrane.

This sequence belongs to the malectin family.

The protein localises to the endoplasmic reticulum membrane. Its function is as follows. Carbohydrate-binding protein with a strong ligand preference for Glc2-N-glycan. May play a role in the early steps of protein N-glycosylation. Can bind di- or higher oligomers but not monomers of glucose, including maltose, maltotriose, maltotetraose, maltoheptaose, nigerose, kojibose, cellobiose and isomaltose, although based on their subcellular locations, these are unlikely to all be physiological ligands. This Xenopus laevis (African clawed frog) protein is Malectin-B.